The sequence spans 252 residues: Short-chain dehydrogenase anuI (252 aa).

6 residues coordinate NADP(+): Leu-18, Asp-65, Asn-92, Tyr-171, Lys-175, and Thr-206. Catalysis depends on Tyr-171, which acts as the Proton acceptor. The active-site Proton donor is Tyr-171. The active-site Lowers pKa of active site Tyr is the Lys-175.

Belongs to the short-chain dehydrogenases/reductases (SDR) family.

Its function is as follows. Highly reducing polyketide synthase; part of the gene cluster that mediates the biosynthesis of annullatin D, an alkylated aromatic polyketide with a fused dihydrobenzofuran lactone ring system that exhibits potent agonistic activities toward the cannabinoid receptors. AnuI does not seem to play a role within the pathway. The annullatin backbone 2-hydroxymethyl-3-pentylphenol is assembled from one acetyl-CoA starter unit and 5 malonyl-CoA elongation units by cooperation of the highly reducing polyketide synthase anuA, the short-chain dehydrogenase anuB and the oxidoreductase anuC, before being hydroxylated at the C-5 alkyl chain by the cytochrome P450 monooxygenase anuE to form (8S)-annullatin E. The prenyltransferase anuH subsequently installs one isoprenyl group at the benzene ring to form (8S)-annullatin J. Enzymatic or nonenzymatic dihydro-benzofuran ring formation between the prenyl and the phenolic hydroxyl groups in (8S)-annullatin J results in two diastereomers (2S,9S)-annullatin H and compound 12. The intermediate (2S,9S)-annullatin H is then converted to (2S,9S)-annullatin D by the FAD-linked oxidoreductase anuG-catalyzed five-member lactone ring formation. The isomer 12 acts as a substrate for the short-chain dehydrogenase anuF and is oxidized to (2R)-annullatin F, which is subsequently acetylated by an acetyltransferase leading to (2R)-annullatin G formation. The remaining enzymes identified within the cluster, anuD, anuI and anuJ, seem not to be involved in annullatin biosynthesis. The sequence is that of Short-chain dehydrogenase anuI from Penicillium roqueforti (strain FM164).